Here is a 465-residue protein sequence, read N- to C-terminus: MADSVEQSSVTTKRISAKGARKRFVGTKSASGKHSQGVDRVGSAAHRPVNQIPEEILKDTKLQEALPENYNFEIHKTIWRIQQVKAKRVALQFPEGLLLFACTIADILESFTGCETVIMGDVTYGACCVDDYSARALGCDLLVHYGHSCLVPIDATAGIKMLYVFVDIKIDTAHFVESVRFNLGAGSCLALVSTIQFVAALQAASNELSKDYQVEIPQCKPLSPGEILGCTAPMLKDKDAVIYLGDGRFHLEAVMIANPAIQAYRYDPYDKTFSKEYYDIDKMHEARQTAIKQASLASKYGLILGTLGRQGSPKVLQTLEKQLQSLNMDYIIVLLSEVFPDKLKLFKDVDAWVQVACPRLSIDWGTAFPKPLLSPYEASVALQSVAWQQSYPMDFYAYSSLGGWTPNNESNRPTPANRRKKNLHTEVIIDNVSDSKPVIKESECGSGETCCGKCTKETDKHSSTP.

A compositionally biased stretch (polar residues) spans 1 to 14 (MADSVEQSSVTTKR). The tract at residues 1-42 (MADSVEQSSVTTKRISAKGARKRFVGTKSASGKHSQGVDRVG) is disordered. A compositionally biased stretch (basic residues) spans 15–25 (ISAKGARKRFV). [4Fe-4S] cluster is bound by residues Cys-127, Cys-230, and Cys-357. The disordered stretch occupies residues 442 to 465 (SECGSGETCCGKCTKETDKHSSTP). Basic and acidic residues predominate over residues 454-465 (CTKETDKHSSTP).

The protein belongs to the DPH1/DPH2 family. DPH1 subfamily. Component of the 2-(3-amino-3-carboxypropyl)histidine synthase complex composed of dph1, dph2, dph3 and a NADH-dependent reductase. [4Fe-4S] cluster is required as a cofactor.

It catalyses the reaction L-histidyl-[translation elongation factor 2] + S-adenosyl-L-methionine = 2-[(3S)-amino-3-carboxypropyl]-L-histidyl-[translation elongation factor 2] + S-methyl-5'-thioadenosine + H(+). The protein operates within protein modification; peptidyl-diphthamide biosynthesis. Functionally, catalyzes the first step of diphthamide biosynthesis, a post-translational modification of histidine which occurs in elongation factor 2. Dph1 and dph2 transfer a 3-amino-3-carboxypropyl (ACP) group from S-adenosyl-L-methionine (SAM) to a histidine residue, the reaction is assisted by a reduction system comprising dph3 and a NADH-dependent reductase. In Nematostella vectensis (Starlet sea anemone), this protein is 2-(3-amino-3-carboxypropyl)histidine synthase subunit 1 (dph1).